A 436-amino-acid polypeptide reads, in one-letter code: MANPTIAIVGRPNVGKSTIFNRIAGVRISIVEDTPGVTRDRIYTTGEWLGREFSIIDTGGIDLGDEPFMDQIKHQAEIAIDEADVIIFVASGREGITDADELVAKILYRSNKPVILAVNKVDNPEMRNDIYEFYALGLGDPFPVSGSHGLGIGDVLDEAVKHFPNTSEEEDEDTIKFSLIGRPNVGKSSLINAILGEDRVIVSDIEGTTRDAIDTYFESEEGQKFLMIDTAGMRKRGKVYESTEKYSVMRAMRAIERSDIVLMVLNAEEGIREQDKRVAGYAHEAGRGIIIVVNKWDTVKKDTNTMRDFEAEIRDEFQYLDYAPIIFVSALTKQRLNKLPELIETVSMNQNLRIPSALLNDVVMDAVAINPTPTDKGKRLKIFYATQVAVKPPTFVIFVNEEELMHFSYARFLENQIRKAFTFEGTPIKIIPRRRK.

EngA-type G domains lie at 4 to 167 and 175 to 351; these read PTIA…PNTS and IKFS…MNQN. Residues 10 to 17, 57 to 61, 119 to 122, 181 to 188, 229 to 233, and 294 to 297 each bind GTP; these read GRPNVGKS, DTGGI, NKVD, DTAGM, and NKWD. In terms of domain architecture, KH-like spans 352–436; sequence LRIPSALLND…PIKIIPRRRK (85 aa).

It belongs to the TRAFAC class TrmE-Era-EngA-EngB-Septin-like GTPase superfamily. EngA (Der) GTPase family. Associates with the 50S ribosomal subunit.

Its function is as follows. GTPase that plays an essential role in the late steps of ribosome biogenesis. This is GTPase Der from Enterococcus faecalis (strain ATCC 700802 / V583).